A 991-amino-acid chain; its full sequence is Antigenic heat-stable 120 kDa protein (991 aa).

Disordered stretches follow at residues 1–37, 54–73, and 348–384; these read DTSEFDPLANKEYTEEQKQTEEQEQKEFLSHTTTPAL, TPSMSALSGNISPDSQTSDP, and GQSKEQPLITPQQTTSSSVEPPQYKQQVPPITPTNQP. Residues 12–29 are compositionally biased toward basic and acidic residues; the sequence is EYTEEQKQTEEQEQKEFL. The segment covering 348-373 has biased composition (polar residues); the sequence is GQSKEQPLITPQQTTSSSVEPPQYKQ.

Its subcellular location is the cytoplasm. This Rickettsia sibirica protein is Antigenic heat-stable 120 kDa protein (sca4).